The primary structure comprises 102 residues: Keratin-associated protein 25-1 (102 aa).

This sequence belongs to the PMG family. Interacts with hair keratins.

Its function is as follows. In the hair cortex, hair keratin intermediate filaments are embedded in an interfilamentous matrix, consisting of hair keratin-associated proteins (KRTAP), which are essential for the formation of a rigid and resistant hair shaft through their extensive disulfide bond cross-linking with abundant cysteine residues of hair keratins. The matrix proteins include the high-sulfur and high-glycine-tyrosine keratins. This Homo sapiens (Human) protein is Keratin-associated protein 25-1 (KRTAP25-1).